The chain runs to 1258 residues: Plasma membrane calcium-transporting ATPase 3 (1258 aa).

Polar residues predominate over residues 1-19 (MGDMANSSIEFHPKPQQQR). The tract at residues 1 to 22 (MGDMANSSIEFHPKPQQQREVP) is disordered. Residues 1–97 (MGDMANSSIE…NFIPPKQPKT (97 aa)) are Cytoplasmic-facing. Serine 8 is modified (phosphoserine). The helical transmembrane segment at 98 to 118 (FLQLVWEALQDVTLIILEVAA) threads the bilayer. Residues 119 to 155 (IVSLGLSFYAPPGEESEACGNVSGGAEDEGEAEAGWI) lie on the Extracellular side of the membrane. A helical transmembrane segment spans residues 156–176 (EGAAILLSVICVVLVTAFNDW). Over 177-364 (SKEKQFRGLQ…KEKSVLQGKL (188 aa)) the chain is Cytoplasmic. Disordered regions lie at residues 298–328 (EEEK…GAVA) and 335–354 (KSAE…NVPK). Basic and acidic residues-rich tracts occupy residues 299–308 (EEKKDKKGKQ) and 342–354 (MEER…NVPK). Residues 365-384 (TKLAVQIGKAGLVMSAITVI) form a helical membrane-spanning segment. Topologically, residues 385 to 417 (ILVLYFVIETFVVDGRVWLAECTPVYVQYFVKF) are extracellular. Residues 418-435 (FIIGVTVLVVAVPEGLPL) form a helical membrane-spanning segment. At 436-849 (AVTISLAYSV…MWGRNVYDSI (414 aa)) the chain is on the cytoplasmic side. Catalysis depends on aspartate 473, which acts as the 4-aspartylphosphate intermediate. The Mg(2+) site is built by aspartate 794 and aspartate 798. Residues 850–869 (SKFLQFQLTVNVVAVIVAFT) form a helical membrane-spanning segment. The Extracellular segment spans residues 870-879 (GACITQDSPL). Residues 880–900 (KAVQMLWVNLIMDTFASLALA) traverse the membrane as a helical segment. Residues 901 to 920 (TEPPTESLLLRKPYGRDKPL) lie on the Cytoplasmic side of the membrane. A helical transmembrane segment spans residues 921–943 (ISRTMMKNILGHAVYQLTIIFTL). Residues 944–961 (LFVGELFFDIDSGRNAPL) lie on the Extracellular side of the membrane. The helical transmembrane segment at 962–983 (HSPPSEHYTIIFNTFVMMQLFN) threads the bilayer. The Cytoplasmic segment spans residues 984–1002 (EINARKIHGERNVFDGIFS). Residues 1003–1024 (NPIFCTIVLGTFGIQIVIVQFG) form a helical membrane-spanning segment. At 1025–1034 (GKPFSCSPLS) the chain is on the extracellular side. Residues 1035–1056 (TEQWLWCLFVGVGELVWGQVIA) form a helical membrane-spanning segment. Residues 1057-1258 (TIPTSQLKCL…SPLHSMETSL (202 aa)) are Cytoplasmic-facing. Threonine 1079 carries the post-translational modification Phosphothreonine. Residues 1097-1114 (LRRGQILWFRGLNRIQTQ) form a calmodulin-binding subdomain A region. The residue at position 1113 (threonine 1113) is a Phosphothreonine; by PKC. The tract at residues 1115-1124 (MEVVSTFKRS) is calmodulin-binding subdomain B. Phosphoserine is present on serine 1126. The tract at residues 1204–1258 (ENEERLRAPPPPPPNQNNNAIDSGIYLTTHATKSATSSAFSSRPGSPLHSMETSL) is disordered. A compositionally biased stretch (low complexity) spans 1231–1245 (TTHATKSATSSAFSS).

Belongs to the cation transport ATPase (P-type) (TC 3.A.3) family. Type IIB subfamily. Interacts with PDZD11. Interacts (via N-terminus) with YWHAE. In terms of tissue distribution, expressed predominantly in brain and skeletal muscle. Expressed in the molecular layer of the cerebellar cortex, in particular in granule cells (at protein level). Expressed in aldosterone producing glomerulosa cells of adrenal glands (at protein level). Detected at low levels in various tissues including testis, stomach, small intestine, and large intestine. Most abundant form in brain and most other tissues. As to expression, most abundant form in skeletal muscle and is also found in brain and at low levels in testis and kidney.

Its subcellular location is the cell membrane. It localises to the presynaptic cell membrane. The catalysed reaction is Ca(2+)(in) + ATP + H2O = Ca(2+)(out) + ADP + phosphate + H(+). ATP-driven Ca(2+) ion pump involved in the maintenance of basal intracellular Ca(2+) levels at the presynaptic terminals. Uses ATP as an energy source to transport cytosolic Ca(2+) ions across the plasma membrane to the extracellular compartment. May counter-transport protons, but the mechanism and the stoichiometry of this Ca(2+)/H(+) exchange remains to be established. The protein is Plasma membrane calcium-transporting ATPase 3 (Atp2b3) of Rattus norvegicus (Rat).